The sequence spans 576 residues: Apolipoprotein N-acyltransferase 1 (576 aa).

7 helical membrane passes run 15–35, 38–58, 60–80, 92–112, 128–148, 168–188, and 204–224; these read LILC…FSFF, GVFA…TSIW, AFLW…YWIP, FVSI…FFLF, YILL…FQIF, ICGV…FLIL, and IASL…IGYI. The region spanning 236–538 is the CN hydrolase domain; the sequence is LSVLMIQPDT…TGTRAFSIRL (303 aa). Glu-285 (proton acceptor) is an active-site residue. The active site involves Lys-355. Cys-446 functions as the Nucleophile in the catalytic mechanism. A helical transmembrane segment spans residues 549-569; the sequence is FGNSFLWIFCILILISRLIFV.

The protein belongs to the CN hydrolase family. Apolipoprotein N-acyltransferase subfamily.

It localises to the cell inner membrane. The catalysed reaction is N-terminal S-1,2-diacyl-sn-glyceryl-L-cysteinyl-[lipoprotein] + a glycerophospholipid = N-acyl-S-1,2-diacyl-sn-glyceryl-L-cysteinyl-[lipoprotein] + a 2-acyl-sn-glycero-3-phospholipid + H(+). It functions in the pathway protein modification; lipoprotein biosynthesis (N-acyl transfer). In terms of biological role, catalyzes the phospholipid dependent N-acylation of the N-terminal cysteine of apolipoprotein, the last step in lipoprotein maturation. In Leptospira interrogans serogroup Icterohaemorrhagiae serovar copenhageni (strain Fiocruz L1-130), this protein is Apolipoprotein N-acyltransferase 1.